We begin with the raw amino-acid sequence, 280 residues long: Ribulose-phosphate 3-epimerase, chloroplastic (280 aa).

The transit peptide at 1–45 (SLGSSTLLQSQISGFGGSQKLQKISFSNPNSLTFTRRRIQTVVNA) directs the protein to the chloroplast. S62 contacts substrate. A divalent metal cation-binding residues include H87, D89, and H120. Residue D89 is the Proton acceptor of the active site. Substrate-binding positions include H120, 198–201 (GFGG), 231–233 (DGG), and 253–254 (GS). Residue D231 participates in a divalent metal cation binding. The active-site Proton donor is D231.

The protein belongs to the ribulose-phosphate 3-epimerase family. Homohexamer. It depends on Co(2+) as a cofactor. Requires Fe(2+) as cofactor. Mn(2+) serves as cofactor. The cofactor is Zn(2+). Highest level of expression in leaves, whereas it is low in roots, tubers, and stems.

The protein resides in the plastid. Its subcellular location is the chloroplast thylakoid membrane. The enzyme catalyses D-ribulose 5-phosphate = D-xylulose 5-phosphate. Its pathway is carbohydrate biosynthesis; Calvin cycle. Functionally, catalyzes the reversible epimerization of D-ribulose 5-phosphate to D-xylulose 5-phosphate. The sequence is that of Ribulose-phosphate 3-epimerase, chloroplastic from Solanum tuberosum (Potato).